The sequence spans 92 residues: 10 kDa late embryogenesis abundant protein (92 aa).

Positions 1 to 10 (MASQQGQQTR) are enriched in polar residues. Residues 1-92 (MASQQGQQTR…GEREEEEEED (92 aa)) are disordered. Composition is skewed to basic and acidic residues over residues 11-26 (KIPE…RAAK) and 38-71 (KSLE…EMGK).

Belongs to the small hydrophilic plant seed protein family. As to expression, maximally expressed in dry seeds. Also present in mid-maturation embryos.

LEA proteins are late embryonic proteins abundant in higher plant seed embryos. They may play an essential role in seed survival and in controlling water exchanges during seed desiccation and imbibition. The sequence is that of 10 kDa late embryogenesis abundant protein from Helianthus annuus (Common sunflower).